Here is a 358-residue protein sequence, read N- to C-terminus: Tribbles homolog 3 (358 aa).

A disordered region spans residues 1–54; the sequence is MRATPLAAPAGSLSRKKRLELDDNLDTERPVQKRARSGPQPRLPPCLLPLSPPT. The interval 1–127 is interaction with DDIT3/CHOP; the sequence is MRATPLAAPA…KHVARPTEVL (127 aa). At Ser-12 the chain carries Phosphoserine. Residues 41 to 54 show a composition bias toward pro residues; that stretch reads PRLPPCLLPLSPPT. Residues 68–316 enclose the Protein kinase domain; it reads LGPYVLLEPE…TGILLHPWLR (249 aa).

The protein belongs to the protein kinase superfamily. CAMK Ser/Thr protein kinase family. Tribbles subfamily. As to quaternary structure, interacts with AKT1, AKT2, MAP2K1 and MAP2K7. Interacts with ATF4. Interacts with DDIT3/CHOP and inhibits its interaction with EP300/P300. Interacts with APOBEC3C. Interacts (via N-terminus) with APOBEC3A. Interacts with RELA. Highest expression in liver, pancreas, peripheral blood leukocytes and bone marrow. Also highly expressed in a number of primary lung, colon and breast tumors. Expressed in spleen, thymus, and prostate and is undetectable in other examined tissues, including testis, ovary, small intestine, colon, leukocyte, heart, brain, placenta, lung, skeletal muscle, and kidney.

It is found in the nucleus. Inactive protein kinase which acts as a regulator of the integrated stress response (ISR), a process for adaptation to various stress. Inhibits the transcriptional activity of DDIT3/CHOP and is involved in DDIT3/CHOP-dependent cell death during ER stress. May play a role in programmed neuronal cell death but does not appear to affect non-neuronal cells. Acts as a negative feedback regulator of the ATF4-dependent transcription during the ISR: while TRIB3 expression is promoted by ATF4, TRIB3 protein interacts with ATF4 and inhibits ATF4 transcription activity. Disrupts insulin signaling by binding directly to Akt kinases and blocking their activation. May bind directly to and mask the 'Thr-308' phosphorylation site in AKT1. Interacts with the NF-kappa-B transactivator p65 RELA and inhibits its phosphorylation and thus its transcriptional activation activity. Interacts with MAPK kinases and regulates activation of MAP kinases. Can inhibit APOBEC3A editing of nuclear DNA. The chain is Tribbles homolog 3 (TRIB3) from Homo sapiens (Human).